A 675-amino-acid polypeptide reads, in one-letter code: DNA ligase (675 aa).

NAD(+)-binding positions include 34–38 (DAEYD), 83–84 (SL), and Glu116. Lys118 acts as the N6-AMP-lysine intermediate in catalysis. Arg139, Glu176, Lys293, and Lys317 together coordinate NAD(+). The Zn(2+) site is built by Cys411, Cys414, Cys429, and Cys435. The region spanning 594-675 (AGENPFKGKT…FLAIVNAYKR (82 aa)) is the BRCT domain.

It belongs to the NAD-dependent DNA ligase family. LigA subfamily. It depends on Mg(2+) as a cofactor. The cofactor is Mn(2+).

It carries out the reaction NAD(+) + (deoxyribonucleotide)n-3'-hydroxyl + 5'-phospho-(deoxyribonucleotide)m = (deoxyribonucleotide)n+m + AMP + beta-nicotinamide D-nucleotide.. DNA ligase that catalyzes the formation of phosphodiester linkages between 5'-phosphoryl and 3'-hydroxyl groups in double-stranded DNA using NAD as a coenzyme and as the energy source for the reaction. It is essential for DNA replication and repair of damaged DNA. The sequence is that of DNA ligase from Mannheimia succiniciproducens (strain KCTC 0769BP / MBEL55E).